Reading from the N-terminus, the 206-residue chain is Cytochrome b-245 chaperone 1 homolog (206 aa).

The chain crosses the membrane as a helical span at residues 21 to 43 (GIRSWSILVGIASVGLAAAYYSS). The disordered stretch occupies residues 172-206 (ADDDYPDDDDGIEDLGLGDSSDSQDDPDGDDDEEH). Acidic residues-rich tracts occupy residues 174–184 (DDYPDDDDGIE) and 193–206 (DSQDDPDGDDDEEH).

This sequence belongs to the CYBC1 family.

The protein resides in the endoplasmic reticulum membrane. Functionally, functions as a chaperone necessary for a stable expression of the CYBA and CYBB subunits of the cytochrome b-245 heterodimer. This chain is Cytochrome b-245 chaperone 1 homolog, found in Danio rerio (Zebrafish).